The sequence spans 145 residues: 3-dehydroquinate dehydratase (145 aa).

The active-site Proton acceptor is Tyr22. Asn71, His77, and Asp84 together coordinate substrate. The Proton donor role is filled by His97. Substrate is bound by residues 98 to 99 (IS) and Arg108.

This sequence belongs to the type-II 3-dehydroquinase family. As to quaternary structure, homododecamer.

It catalyses the reaction 3-dehydroquinate = 3-dehydroshikimate + H2O. Its pathway is metabolic intermediate biosynthesis; chorismate biosynthesis; chorismate from D-erythrose 4-phosphate and phosphoenolpyruvate: step 3/7. Catalyzes a trans-dehydration via an enolate intermediate. In Thermotoga neapolitana (strain ATCC 49049 / DSM 4359 / NBRC 107923 / NS-E), this protein is 3-dehydroquinate dehydratase.